The sequence spans 73 residues: MKLTCVLIIAVLFLTACQLTTGEQKDHAQRSADRNSKLTRQCTPVGGSCSRHYHCCSLYCNKNIGQCLATSYP.

The first 22 residues, 1–22 (MKLTCVLIIAVLFLTACQLTTG), serve as a signal peptide directing secretion. Residues 23–40 (EQKDHAQRSADRNSKLTR) constitute a propeptide that is removed on maturation. Q41 carries the pyrrolidone carboxylic acid modification. 3 disulfides stabilise this stretch: C42/C56, C49/C60, and C55/C67.

The protein belongs to the conotoxin O1 superfamily. In terms of tissue distribution, expressed by the venom duct.

Its subcellular location is the secreted. This Conus arenatus (Sand-dusted cone) protein is Conotoxin ArMKLT2-022.